The following is a 259-amino-acid chain: Aminoglycoside 3'-phosphotransferase (259 aa).

Catalysis depends on D187, which acts as the Proton acceptor.

This sequence belongs to the aminoglycoside phosphotransferase family.

The catalysed reaction is kanamycin A + ATP = kanamycin 3'-phosphate + ADP + H(+). Resistance to kanamycin and structurally-related aminoglycosides, including amikacin. The sequence is that of Aminoglycoside 3'-phosphotransferase (aphA-6) from Acinetobacter baumannii.